Consider the following 86-residue polypeptide: Large ribosomal subunit protein uL23 (86 aa).

It belongs to the universal ribosomal protein uL23 family. Part of the 50S ribosomal subunit. Contacts protein L29.

Its function is as follows. Binds to 23S rRNA. One of the proteins that surrounds the polypeptide exit tunnel on the outside of the ribosome. The sequence is that of Large ribosomal subunit protein uL23 from Methanococcus maripaludis (strain C6 / ATCC BAA-1332).